The following is a 312-amino-acid chain: sn-1-specific diacylglycerol lipase ABHD11 (312 aa).

The transit peptide at Met1–His14 directs the protein to the mitochondrion. In terms of domain architecture, AB hydrolase-1 spans Pro62–Lys297. Active-site charge relay system residues include Ser136, Glu232, and His291.

The protein belongs to the AB hydrolase superfamily. Phosphorylated.

The protein localises to the mitochondrion. Its subcellular location is the mitochondrion matrix. The enzyme catalyses 1-octadecanoyl-2-(5Z,8Z,11Z,14Z-eicosatetraenoyl)-sn-glycerol + H2O = 2-(5Z,8Z,11Z,14Z-eicosatetraenoyl)-glycerol + octadecanoate + H(+). It carries out the reaction a 1,2-diacyl-sn-glycerol + H2O = a 2-acylglycerol + a fatty acid + H(+). It catalyses the reaction a 1,3-diacyl-sn-glycerol + H2O = a 1-acyl-sn-glycerol + a fatty acid + H(+). The catalysed reaction is 1-octadecanoyl-2-(9Z-octadecenoyl)-sn-glycerol + H2O = 2-(9Z-octadecenoyl)-glycerol + octadecanoate + H(+). The enzyme catalyses 1-octadecanoyl-2-(4Z,7Z,10Z,13Z,16Z,19Z-docosahexaenoyl)-sn-glycerol + H2O = 2-(4Z,7Z,10Z,13Z,16Z,19Z-docosahexaenoyl)-glycerol + octadecanoate + H(+). It carries out the reaction 1,2-didecanoylglycerol + H2O = decanoylglycerol + decanoate + H(+). In terms of biological role, catalyzes the hydrolysis of diacylglycerol in vitro and may function as a key regulator in lipid metabolism, namely by regulating the intracellular levels of diacylglycerol. 1,2-diacyl-sn-glycerols are the preferred substrate over 1,3-diacyl-sn-glycerols. The enzyme hydrolyzes stearate in preference to palmitate from the sn-1 position of 1,2-diacyl-sn-glycerols. The sequence is that of sn-1-specific diacylglycerol lipase ABHD11 from Xenopus laevis (African clawed frog).